The sequence spans 492 residues: Trehalose-6-phosphate synthase (492 aa).

R25 serves as a coordination point for D-glucose 6-phosphate. 45 to 46 (GG) lines the UDP-alpha-D-glucose pocket. D-glucose 6-phosphate contacts are provided by Y101 and D155. Residues R297 and K302 each contribute to the UDP-alpha-D-glucose site. R335 is a binding site for D-glucose 6-phosphate. 400 to 404 (LVAKE) provides a ligand contact to UDP-alpha-D-glucose.

Belongs to the glycosyltransferase 20 family. In terms of assembly, homotetramer.

The catalysed reaction is ADP-alpha-D-glucose + D-glucose 6-phosphate = alpha,alpha-trehalose 6-phosphate + ADP + H(+). It carries out the reaction CDP-alpha-D-glucose + D-glucose 6-phosphate = alpha,alpha-trehalose 6-phosphate + CDP + H(+). It catalyses the reaction GDP-alpha-D-glucose + D-glucose 6-phosphate = alpha,alpha-trehalose 6-phosphate + GDP + H(+). The enzyme catalyses TDP-alpha-D-glucose + D-glucose 6-phosphate = 5-methyl-UDP + alpha,alpha-trehalose 6-phosphate + H(+). The catalysed reaction is D-glucose 6-phosphate + UDP-alpha-D-glucose = alpha,alpha-trehalose 6-phosphate + UDP + H(+). The protein operates within glycan biosynthesis; trehalose biosynthesis. Probably involved in the osmoprotection via the biosynthesis of trehalose and in the production of glycogen and alpha-glucan via the TreS-Pep2 branch involved in the biosynthesis of maltose-1-phosphate (M1P). Catalyzes the transfer of glucose from UDP-glucose (UDP-Glc) to D-glucose 6-phosphate (Glc-6-P) to form trehalose-6-phosphate. Probably also able to use ADP-Glc, CDP-Glc, GDP-Glc and TDP-Glc as glucosyl donors. The sequence is that of Trehalose-6-phosphate synthase from Mycobacterium avium (strain 104).